The sequence spans 696 residues: Serotransferrin (696 aa).

Transferrin-like domains lie at 6–332 (VRWC…NLRE) and 346–672 (VRWC…NLRK). Cystine bridges form between C9–C47 and C19–C38. The residue at position 23 (R23) is a Dimethylated arginine. N-linked (GlcNAc...) asparagine glycosylation is present at N25. Fe(3+)-binding residues include D62 and Y94. Disulfide bonds link C117/C198, C157/C173, C160/C181, C170/C183, and C231/C245. 4 residues coordinate hydrogencarbonate: T119, R123, A125, and G126. Y192 provides a ligand contact to Fe(3+). Residue H253 coordinates Fe(3+). 11 disulfide bridges follow: C343-C605, C349-C381, C359-C372, C406-C682, C423-C646, C456-C532, C480-C673, C490-C504, C501-C515, C572-C586, and C624-C629. S374 carries the phosphoserine modification. Fe(3+) contacts are provided by D396 and Y431. Hydrogencarbonate-binding residues include T458, R462, A464, and G465. N-linked (GlcNAc...) asparagine glycosylation is present at N497. Y526 contacts Fe(3+). Residue H594 coordinates Fe(3+). S674 carries the phosphoserine modification.

Belongs to the transferrin family. Monomer. Part of a complex composed of SLC40A1/ferroportin, TF/transferrin and HEPH/hephaestin that transfers iron from cells to transferrin. As to expression, expressed by the liver and secreted in plasma.

It is found in the secreted. In terms of biological role, transferrins are iron binding transport proteins which can bind two Fe(3+) ions in association with the binding of an anion, usually bicarbonate. It is responsible for the transport of iron from sites of absorption and heme degradation to those of storage and utilization. Serum transferrin may also have a further role in stimulating cell proliferation. The polypeptide is Serotransferrin (TF) (Sus scrofa (Pig)).